Here is a 428-residue protein sequence, read N- to C-terminus: Enolase (428 aa).

Position 163 (Q163) interacts with (2R)-2-phosphoglycerate. E205 functions as the Proton donor in the catalytic mechanism. Positions 242, 285, and 312 each coordinate Mg(2+). Residues K337, R366, S367, and K388 each coordinate (2R)-2-phosphoglycerate. K337 (proton acceptor) is an active-site residue.

This sequence belongs to the enolase family. It depends on Mg(2+) as a cofactor.

The protein localises to the cytoplasm. The protein resides in the secreted. It localises to the cell surface. The catalysed reaction is (2R)-2-phosphoglycerate = phosphoenolpyruvate + H2O. It functions in the pathway carbohydrate degradation; glycolysis; pyruvate from D-glyceraldehyde 3-phosphate: step 4/5. Its function is as follows. Catalyzes the reversible conversion of 2-phosphoglycerate (2-PG) into phosphoenolpyruvate (PEP). It is essential for the degradation of carbohydrates via glycolysis. This is Enolase from Neisseria meningitidis serogroup C (strain 053442).